The following is a 125-amino-acid chain: Small ribosomal subunit protein uS17 (125 aa).

Disordered stretches follow at residues 1 to 21 and 101 to 125; these read MSSS…VSSR and VAAQ…APQA.

It belongs to the universal ribosomal protein uS17 family. As to quaternary structure, part of the 30S ribosomal subunit.

In terms of biological role, one of the primary rRNA binding proteins, it binds specifically to the 5'-end of 16S ribosomal RNA. In Opitutus terrae (strain DSM 11246 / JCM 15787 / PB90-1), this protein is Small ribosomal subunit protein uS17.